A 398-amino-acid polypeptide reads, in one-letter code: Histone-lysine N-methyltransferase ASHR2 (398 aa).

In terms of domain architecture, SET spans 11-270 (TLLRVAEIGG…EGREVCLSYF (260 aa)).

This sequence belongs to the class V-like SAM-binding methyltransferase superfamily. Histone-lysine methyltransferase family. SET2 subfamily.

The protein localises to the nucleus. Its subcellular location is the chromosome. The enzyme catalyses L-lysyl-[histone] + S-adenosyl-L-methionine = N(6)-methyl-L-lysyl-[histone] + S-adenosyl-L-homocysteine + H(+). In terms of biological role, histone methyltransferase. The polypeptide is Histone-lysine N-methyltransferase ASHR2 (ASHR2) (Arabidopsis thaliana (Mouse-ear cress)).